Here is a 101-residue protein sequence, read N- to C-terminus: Ubiquitin-like protein SMT3 (101 aa).

Ser2 carries the post-translational modification N-acetylserine. Phosphoserine occurs at positions 2 and 4. Residues Thr22–Gly98 enclose the Ubiquitin-like domain. Residue Gly98 forms a Glycyl lysine isopeptide (Gly-Lys) (interchain with K-? in acceptor proteins) linkage. Residues Ala99–Tyr101 constitute a propeptide that is removed on maturation.

This sequence belongs to the ubiquitin family. SUMO subfamily. Activated by a E1 ligase composed of AOS1 and UBA2.

Not known; suppressor of MIF2 mutations. The sequence is that of Ubiquitin-like protein SMT3 (SMT3) from Saccharomyces cerevisiae (strain ATCC 204508 / S288c) (Baker's yeast).